The sequence spans 347 residues: MRIEQELKLGFKDVLFRPKRSTLKSRSQVELTRNFTFKHSGRQWSGTPVIAANMDSVGSFAMAKALSEHGVMTAVHKHYTVADWAEFIKENDASVLKNAMVSTGTSEADFQKTKDIMALTDDLIFICIDIANGYSEHLVQYVEKVRAEFPDKVISAGNVVTGDMVEELILAGADIVKVGIGPGSVCTTRVKTGVGYPQLSAIIECADAAHGLGGRIIGDGGCSCAGDVSKAFGGGADFVMLGGMLAGHEESGGEVIEQDGKQFMKFYGMSSQSAMDKHSGGVAKYRAAEGKTVLLPFRGSVHNTISDILGGVRSTCTYVGAAQLKELTKRTTFIRVQEQENNVFGKE.

108–131 (ADFQKTKDIMALTDDLIFICIDIA) lines the NADP(+) pocket. 2 residues coordinate K(+): G181 and G183. The Thioimidate intermediate role is filled by C186. 216-239 (IIGDGGCSCAGDVSKAFGGGADFV) is a binding site for NADP(+).

The protein belongs to the IMPDH/GMPR family. GuaC type 1 subfamily. Homotetramer.

It catalyses the reaction IMP + NH4(+) + NADP(+) = GMP + NADPH + 2 H(+). In terms of biological role, catalyzes the irreversible NADPH-dependent deamination of GMP to IMP. It functions in the conversion of nucleobase, nucleoside and nucleotide derivatives of G to A nucleotides, and in maintaining the intracellular balance of A and G nucleotides. The polypeptide is GMP reductase (Aliivibrio fischeri (strain MJ11) (Vibrio fischeri)).